The following is a 181-amino-acid chain: Lysozyme B (181 aa).

The signal sequence occupies residues 1–19; sequence MRISFFLLILAVIIGYAYG. Positions 139–181 are excised as a propeptide; it reads LTDSRPLGPFNVTEEEKAQLFIDHEIAMAQCEAEKTCNGFDLE.

Belongs to the dictyostelium lysozyme family. Post-translationally, contains six disulfide bonds.

Its subcellular location is the cytoplasmic vesicle lumen. It carries out the reaction Hydrolysis of (1-&gt;4)-beta-linkages between N-acetylmuramic acid and N-acetyl-D-glucosamine residues in a peptidoglycan and between N-acetyl-D-glucosamine residues in chitodextrins.. Has antibacterial activity. This is Lysozyme B (alyB) from Dictyostelium discoideum (Social amoeba).